Here is a 190-residue protein sequence, read N- to C-terminus: Xanthine phosphoribosyltransferase (190 aa).

Residues Leu20 and Asn27 each contribute to the xanthine site. Residue 128 to 132 participates in 5-phospho-alpha-D-ribose 1-diphosphate binding; sequence ANGKA. Lys156 contacts xanthine.

The protein belongs to the purine/pyrimidine phosphoribosyltransferase family. Xpt subfamily. In terms of assembly, homodimer.

The protein localises to the cytoplasm. It carries out the reaction XMP + diphosphate = xanthine + 5-phospho-alpha-D-ribose 1-diphosphate. The protein operates within purine metabolism; XMP biosynthesis via salvage pathway; XMP from xanthine: step 1/1. Converts the preformed base xanthine, a product of nucleic acid breakdown, to xanthosine 5'-monophosphate (XMP), so it can be reused for RNA or DNA synthesis. The protein is Xanthine phosphoribosyltransferase of Pseudomonas entomophila (strain L48).